Reading from the N-terminus, the 845-residue chain is Beta-mannosidase B (845 aa).

Catalysis depends on E432, which acts as the Proton donor. Residues N717 and N723 are each glycosylated (N-linked (GlcNAc...) asparagine).

This sequence belongs to the glycosyl hydrolase 2 family. Beta-mannosidase B subfamily.

The catalysed reaction is Hydrolysis of terminal, non-reducing beta-D-mannose residues in beta-D-mannosides.. It functions in the pathway glycan metabolism; N-glycan degradation. Its function is as follows. Exoglycosidase that cleaves the single beta-linked mannose residue from the non-reducing end of beta-mannosidic oligosaccharides of various complexity and length. Prefers mannobiose over mannotriose and has no activity against polymeric mannan. Is also severely restricted by galactosyl substitutions at the +1 subsite. The polypeptide is Beta-mannosidase B (mndB) (Aspergillus clavatus (strain ATCC 1007 / CBS 513.65 / DSM 816 / NCTC 3887 / NRRL 1 / QM 1276 / 107)).